A 201-amino-acid polypeptide reads, in one-letter code: Ras-related protein Rab-10 (201 aa).

A GTP-binding site is contributed by 16-23 (GDSGVGKT). Positions 38 to 46 (FISTIGIDF) match the Effector region motif. GTP contacts are provided by residues 64–68 (DTAGQ), 122–125 (NKCD), and 152–154 (SAK). The interval 175–201 (PDSTDEQSRDTVNPVQPQRQSSSGGCC) is disordered. The segment covering 184–201 (DTVNPVQPQRQSSSGGCC) has biased composition (polar residues). 2 S-geranylgeranyl cysteine lipidation sites follow: cysteine 200 and cysteine 201.

This sequence belongs to the small GTPase superfamily. Rab family. As to quaternary structure, interacts (GTP-bound form) with ehbp-1 (via C-terminal coiled coil). Interacts (GTP-bound form) with cnt-1 (via C-terminal ankyrin repeat). Interacts (GTP-bound form) with rab-5 GAP, tbc-2 (via putative coiled coil domain). Interacts (GTP-bound form) with amph-1. In terms of tissue distribution, almost ubiquitously expressed. Expressed in intestine, hypodermis, seam cells, body-wall muscles, many neurons, oviduct sheath cell, spermatheca, coelomocytes and pharyngeal and nerve ring.

The protein resides in the early endosome membrane. It is found in the late endosome membrane. It localises to the golgi apparatus membrane. The protein localises to the endosome membrane. It carries out the reaction GTP + H2O = GDP + phosphate + H(+). With respect to regulation, rab activation is generally mediated by a guanine exchange factor (GEF), while inactivation through hydrolysis of bound GTP is catalyzed by a GTPase activating protein (GAP). Tbc-4 is a likely GAP of this rab. Denn-4 is a putative GEF of this rab. The small GTPases Rab are key regulators of intracellular membrane trafficking, from the formation of transport vesicles to their fusion with membranes. Rabs cycle between an inactive GDP-bound form and an active GTP-bound form that is able to recruit to membranes different set of downstream effectors directly responsible for vesicle formation, movement, tethering and fusion. Required for basolateral endocytic recycling, the return of macromolecules and fluid from endosomes to the plasma membrane, in polarized epithelial cells of the intestine upstream of rme-1. Involved in the formation of the endosomal tubular network that is required for basolateral recycling of clathrin-independent endocytic cargo such as daf-4 in the intestine. Required for the recruitment of cnt-1 effector to endosomal membranes in the intestinal epithelium, which is important for the regulation of levels of endosomal phosphatidylinositol-4,5-bisphosphate, a key phosphoinositide in membrane traffic, and for the recruitment of endosomal membrane-bending proteins, rme-1 and sdpn-1. Recruits the rab-5 GTPase-activating protein tbc-2 to endosomes where it then inactivates rab-5 resulting in removal of rab-5 from membranes, which is necessary for cargo transport from early endosomes to recycling endosomes in the basolateral intestine. Regulates recycling of synaptic membrane AMPA glutamate receptor, glr-1, from intracellular endosomal compartments back to synapses in a cholesterol-dependent endocytosis pathway functioning after clathrin-independent endocytosis in command interneurons. Regulates neuropeptide release from dense core vesicles (DCVs) of cholinergic motoneurons in cooperation with rab-5. They reciprocally recruit each other's inactivating GAP molecule leading to local exclusion of one or the other rab protein at the Golgi-endosomal interphase at an essential stage during DCV sorting. Regulates membrane trafficking of membranes and dendrite proteins from the Golgi and/or endosomal compartments to plasma membrane during dendrite morphogenesis together with the exocyst complex in the multi-dendritic PVD sensory neurons acting in a cell-autonomous manner and requiring its GTPase activity. Functions cell-autonomously together with the exocyst complex to regulate dendrite morphogenesis and anterior-posterior patterning of the PVD neurons dendritic arbor by balancing the anterograde and retrograde transport via molecular motors unc-116 (kinesin heavy chain) and dhc-1 (dynein heavy chain) to appropriately transport branching factors, such as dma-1, to the specific subcellular regions of the developing dendrite in its GTPase activity-dependent manner. The polypeptide is Ras-related protein Rab-10 (Caenorhabditis elegans).